A 188-amino-acid chain; its full sequence is Capsid protein (188 aa).

The protein belongs to the tymoviruses capsid protein family.

The protein resides in the virion. In terms of biological role, self-assembles to form a T=3 icosahedral capsid composed of 180 copies of the capsid protein. The capsid encapsulates the single-stranded RNA genome. The protein is Capsid protein of Theobroma cacao (Cacao).